A 599-amino-acid polypeptide reads, in one-letter code: Ecdysone oxidase (599 aa).

FAD is bound by residues 137 to 140 and 537 to 538; these read NDMV and WH. Histidine 538 acts as the Proton acceptor in catalysis.

This sequence belongs to the GMC oxidoreductase family. Requires FAD as cofactor.

The catalysed reaction is ecdysone + O2 = 3-dehydroecdysone + H2O2. Its function is as follows. Involved in the inactivation of ecdysteroid molting hormones by converting ecdysteroids into 3-dehydroecdysteroids. The protein is Ecdysone oxidase of Spodoptera littoralis (Egyptian cotton leafworm).